The sequence spans 119 residues: Large ribosomal subunit protein bL20 (119 aa).

It belongs to the bacterial ribosomal protein bL20 family.

In terms of biological role, binds directly to 23S ribosomal RNA and is necessary for the in vitro assembly process of the 50S ribosomal subunit. It is not involved in the protein synthesizing functions of that subunit. The protein is Large ribosomal subunit protein bL20 of Xylella fastidiosa (strain M12).